Consider the following 271-residue polypeptide: Histone chaperone asf-1 (271 aa).

The interval 152-271 (KWDSEASAPP…PKQQGMAMAQ (120 aa)) is disordered. 2 stretches are compositionally biased toward acidic residues: residues 168 to 185 (PEAD…DELA) and 211 to 258 (IEED…EMEI).

Belongs to the ASF1 family. In terms of assembly, interacts with histone H3 and histone H4.

Its subcellular location is the nucleus. Functionally, histone chaperone that facilitates histone deposition and histone exchange and removal during nucleosome assembly and disassembly. This Neurospora crassa (strain ATCC 24698 / 74-OR23-1A / CBS 708.71 / DSM 1257 / FGSC 987) protein is Histone chaperone asf-1 (asf-1).